A 76-amino-acid chain; its full sequence is Immune protein Tsi5 (76 aa).

2 helical membrane passes run 19 to 39 and 43 to 63; these read LLMTLVCIPLALLYVCLEWFF and WVTVGVFFGVLVVLRLGLYLY.

It is found in the membrane. Functionally, immunity protein that plays a role in preventing early activation of toxin Tse5. The protein is Immune protein Tsi5 of Pseudomonas aeruginosa (strain ATCC 15692 / DSM 22644 / CIP 104116 / JCM 14847 / LMG 12228 / 1C / PRS 101 / PAO1).